The following is a 252-amino-acid chain: Trans-aconitate 2-methyltransferase (252 aa).

Belongs to the methyltransferase superfamily. Tam family.

The protein resides in the cytoplasm. The catalysed reaction is trans-aconitate + S-adenosyl-L-methionine = (E)-3-(methoxycarbonyl)pent-2-enedioate + S-adenosyl-L-homocysteine. Catalyzes the S-adenosylmethionine monomethyl esterification of trans-aconitate. This is Trans-aconitate 2-methyltransferase from Shigella flexneri serotype 5b (strain 8401).